The following is a 299-amino-acid chain: MINSIRIGTRNSTLALIQTNLVIAQIKQFFPDINCEIVPIITSGDLIQNKPLYDIGGKALFLKEIEQALLDKKIDLAVHSLKDIPGRIPVDLVIAAVLEREDPRDVLVCLNYKSIETLPQNAVIGSSAVRRKAFIKKIRPDLNIKVFRGNVDSRIKKLMTGEVDATILSYAGLKRLNAFNKKYCHLIEYSQILPCVGQGVIAVEIRKDDNAMFNICNQINHIPTFELIKPERAFLEHLDANCSTPIGAYSQYLDAYNIQTDFMLGKLDCNKIIFQTEITNINTSRECGIKAAKMMLAQQ.

Cys-242 carries the S-(dipyrrolylmethanemethyl)cysteine modification.

The protein belongs to the HMBS family. Monomer. The cofactor is dipyrromethane.

It carries out the reaction 4 porphobilinogen + H2O = hydroxymethylbilane + 4 NH4(+). It functions in the pathway porphyrin-containing compound metabolism; protoporphyrin-IX biosynthesis; coproporphyrinogen-III from 5-aminolevulinate: step 2/4. Functionally, tetrapolymerization of the monopyrrole PBG into the hydroxymethylbilane pre-uroporphyrinogen in several discrete steps. In Rickettsia typhi (strain ATCC VR-144 / Wilmington), this protein is Porphobilinogen deaminase.